Consider the following 401-residue polypeptide: Acetate kinase (401 aa).

Asparagine 7 lines the Mg(2+) pocket. Lysine 14 is a binding site for ATP. Substrate is bound at residue arginine 90. Aspartate 147 (proton donor/acceptor) is an active-site residue. ATP is bound by residues 207 to 211 (HLGNG), 282 to 284 (DFR), and 330 to 334 (GVGEN). Mg(2+) is bound at residue glutamate 383.

It belongs to the acetokinase family. As to quaternary structure, homodimer. Mg(2+) is required as a cofactor. The cofactor is Mn(2+).

The protein localises to the cytoplasm. The enzyme catalyses acetate + ATP = acetyl phosphate + ADP. Its pathway is metabolic intermediate biosynthesis; acetyl-CoA biosynthesis; acetyl-CoA from acetate: step 1/2. In terms of biological role, catalyzes the formation of acetyl phosphate from acetate and ATP. Can also catalyze the reverse reaction. The sequence is that of Acetate kinase from Clostridium novyi (strain NT).